The following is a 101-amino-acid chain: Urease subunit beta (101 aa).

It belongs to the urease beta subunit family. In terms of assembly, heterotrimer of UreA (gamma), UreB (beta) and UreC (alpha) subunits. Three heterotrimers associate to form the active enzyme.

It is found in the cytoplasm. It catalyses the reaction urea + 2 H2O + H(+) = hydrogencarbonate + 2 NH4(+). It functions in the pathway nitrogen metabolism; urea degradation; CO(2) and NH(3) from urea (urease route): step 1/1. The chain is Urease subunit beta from Actinobacillus pleuropneumoniae serotype 7 (strain AP76).